The chain runs to 665 residues: Target of rapamycin complex 2 subunit sin1 (665 aa).

Ser-62 is subject to Phosphoserine. Composition is skewed to polar residues over residues 65-83 and 100-109; these read IVAN…TKQV and YATSDLSESS. Residues 65–112 form a disordered region; the sequence is IVANDTVSNVRKPSDTKQVNGAGGQVNHSRAEDSDYATSDLSESSDVG. Phosphoserine is present on Ser-133. One can recognise a CRIM domain in the interval 255 to 392; sequence TSALRALLEH…ATPAQIKENQ (138 aa). A disordered region spans residues 395 to 433; it reads YPFKSKHPTSIPEANNKTHIRHTSSTSSQSQKQAQDVKD. Phosphoserine occurs at positions 404, 490, 502, and 530. Residues 517–537 form a disordered region; sequence RDKKGSTQQLPTSSPQNSVYG. A compositionally biased stretch (polar residues) spans 522–536; sequence STQQLPTSSPQNSVY. In terms of domain architecture, SIN1-type PH spans 558–659; sequence TYQEFLVWKR…IVSRIRALMN (102 aa).

This sequence belongs to the SIN1 family. The target of rapamycin complex 2 (TORC2) is composed of at least bit61, pop3/wat1, sin1, ste20 and tor1. Interacts with the sty1 MAP kinase. In terms of processing, phosphorylated; under environmental stress. Either Ser-61 or Ser-62 and Ser-298, Ser-299 or Ser-301 are phosphorylated as well.

Its function is as follows. Component of the mechanistic target of rapamycin complex 2 (mTORC2), which regulates multiple cellular processes to control cell growth in response to environmental signals. In response to signals, TORC2 phosphorylates AGC protein kinase family members, such as gad8. TORC2 is required for cell survival under various stress conditions. TORC2 positively controls G1 cell-cycle arrest, sexual development and amino acid uptake. Positively regulates amino acid uptake through the control of expression of amino acid permeases. Within the mTORC2 complex, sin1 acts as a substrate adapter which recognizes and binds AGC protein kinase family members for phosphorylation by tor1. In Schizosaccharomyces pombe (strain 972 / ATCC 24843) (Fission yeast), this protein is Target of rapamycin complex 2 subunit sin1.